A 221-amino-acid chain; its full sequence is Chalcone--flavanone isomerase (221 aa).

Threonine 47, asparagine 112, and serine 189 together coordinate substrate.

It belongs to the chalcone isomerase family.

The catalysed reaction is a chalcone = a flavanone.. The protein operates within secondary metabolite biosynthesis; flavonoid biosynthesis. Functionally, catalyzes the intramolecular cyclization of bicyclic chalcones into tricyclic (S)-flavanones. Responsible for the isomerization of 4,2',4',6'-tetrahydroxychalcone (also termed chalcone) into naringenin. The sequence is that of Chalcone--flavanone isomerase (CHI) from Dianthus caryophyllus (Carnation).